Here is a 67-residue protein sequence, read N- to C-terminus: DNA-directed RNA polymerase subunit omega (67 aa).

The protein belongs to the RNA polymerase subunit omega family. The RNAP catalytic core consists of 2 alpha, 1 beta, 1 beta' and 1 omega subunit. When a sigma factor is associated with the core the holoenzyme is formed, which can initiate transcription.

It carries out the reaction RNA(n) + a ribonucleoside 5'-triphosphate = RNA(n+1) + diphosphate. Its function is as follows. Promotes RNA polymerase assembly. Latches the N- and C-terminal regions of the beta' subunit thereby facilitating its interaction with the beta and alpha subunits. This chain is DNA-directed RNA polymerase subunit omega, found in Burkholderia multivorans (strain ATCC 17616 / 249).